The primary structure comprises 342 residues: 4-hydroxy-2-oxovalerate aldolase (342 aa).

The Pyruvate carboxyltransferase domain maps to 5–257; that stretch reads ITLHDMTLRD…DTGVDVWKIQ (253 aa). 13–14 contacts substrate; sequence RD. D14 is a Mn(2+) binding site. H17 functions as the Proton acceptor in the catalytic mechanism. Residues S167 and H196 each contribute to the substrate site. Residues H196 and H198 each contribute to the Mn(2+) site. A substrate-binding site is contributed by Y287.

The protein belongs to the 4-hydroxy-2-oxovalerate aldolase family.

The enzyme catalyses (S)-4-hydroxy-2-oxopentanoate = acetaldehyde + pyruvate. The chain is 4-hydroxy-2-oxovalerate aldolase from Acidovorax sp. (strain JS42).